Reading from the N-terminus, the 234-residue chain is Endonuclease NucS (234 aa).

It belongs to the NucS endonuclease family.

Its subcellular location is the cytoplasm. Cleaves both 3' and 5' ssDNA extremities of branched DNA structures. The protein is Endonuclease NucS of Bifidobacterium adolescentis (strain ATCC 15703 / DSM 20083 / NCTC 11814 / E194a).